The chain runs to 189 residues: Notch ligand osm-11 (189 aa).

The signal sequence occupies residues 1 to 18; sequence MNFITVAALAIVMVLAQA.

As to quaternary structure, may interact with lin-12/Notch receptor. In terms of tissue distribution, expressed in coelomocytes (at protein level).

The protein localises to the apical cell membrane. Its function is as follows. Probable secreted lin-12/Notch ligand or co-ligand involved in the mediation of Notch signaling. Involved in the lin-12/Notch pathway signaling of cell fate in vulval precursor cells (VPCs), acting redundantly with dsl-1 and lag-2. Required for normal octanol avoidance response, acting via both lin-12/Notch and glp-1/Notch signaling pathways in neurons, in concert with lag-2. Involved in regulation of sleep-like quiescence during the larval to adult transition, acting via Notch receptor activation and in parallel with EGF signaling. This chain is Notch ligand osm-11, found in Caenorhabditis elegans.